Reading from the N-terminus, the 648-residue chain is MASVSALTEELESVASELHAIDIQIQELTERRQELLQRKSVLTGKIKQYLEDSSAEASSDLDTSPAAWNKEDFPWFGKVKDVLQNVFKLQKFRPLQLETINVTMARKDIFLVMPTGGGKSLCYQLPALCSDGFTLVICPLISLMEDQLMVLKQLGISATMLNASSSKEHVKWVHAEMVNKNSQLKLIYVTPEKIAKSKMFMSRLEKAYEAGRLTGAAVDEVHCCSQWGHDFRPDYKALGILKRQFPNASLMGLTATATNHVLKDVQKILCVGKCLTFTASFNRPNLFYEVRQKPSSAEDFTEDIVKLINGRYKGQSGIIYCFSQKDSEQITISLQKLGIHAGTYHANMEPEDKTKVHTQWSANELQVVVATVAFGMGIDKPDVRFVIHHSMSKSMENYYQESGRAGRDDSRADCILYYGFGDIFRISSMVVMENVGQQKLYEMVSYCQNVSKCRRVLIAQHFDEVWNADACNKMCDNCCKDVSFEKKNVTQHCRDLIKILKQAEGLNEKLTPLKLIDAWMGKGAAKLRVAGVVAPALPREDLERIVAHALLQQYLKEDYSFTAYATISYLKVGPRACLLSNEAHAVTMQVKKSAQSSVRGALSEARQVEQVDSKGEEQSSGNSQKSKSRLQPSGSKNAGAKKRKLDDA.

The Helicase ATP-binding domain maps to Ile100–Leu275. Met113 to Ser120 is an ATP binding site. Positions Asp219–His222 match the DEVH box motif. In terms of domain architecture, Helicase C-terminal spans Asp299–Ser451. Cys453, Cys471, Cys475, and Cys478 together coordinate Zn(2+). Residues Lys514 and Lys522 each carry the N6-acetyllysine modification. Ser597 is modified (phosphoserine). The tract at residues Ala601 to Ala648 is disordered. The segment covering Arg606–Glu617 has biased composition (basic and acidic residues). A compositionally biased stretch (polar residues) spans Gln618–Lys636. A Phosphoserine modification is found at Ser633. Positions Gly639–Ala648 are enriched in basic residues.

The protein belongs to the helicase family. RecQ subfamily. May form homodimers or higher order oligomers. Interacts with EXO1. Interacts with MLH1. Interacts with PARP1. Requires Mg(2+) as cofactor. It depends on Mn(2+) as a cofactor. Zn(2+) is required as a cofactor. As to expression, expressed in all tissues examined. Only expressed in spermatocytes. Expression increases at pachytene (17 days old) and decreases after completion of meiosis II (7 weeks old).

The protein resides in the nucleus. The enzyme catalyses Couples ATP hydrolysis with the unwinding of duplex DNA by translocating in the 3'-5' direction.. The catalysed reaction is ATP + H2O = ADP + phosphate + H(+). It carries out the reaction dATP + H2O = dADP + phosphate + H(+). In terms of biological role, DNA helicase that plays a role in DNA damage repair and genome stability. Exhibits a magnesium- and ATP-dependent DNA-helicase activity that unwinds single- and double-stranded DNA in a 3'-5' direction. Plays a role in restoring regressed replication forks. Required to restart stalled replication forks induced by abortive topoisomerase 1 and 2 lesions. May play a role in the repair of DNA that is damaged by ultraviolet light or other mutagens. The sequence is that of ATP-dependent DNA helicase Q1 (Recql) from Mus musculus (Mouse).